Consider the following 469-residue polypeptide: MKKKVIDFIKENSMIKSGDKVLVALSGGPDSVCLLHILSELRELLHIEVYAAHVNHCLRGESALKDEAYVEELCKNLNIKCFVKRVDINKISEEQNISTEMAGREERYKFFEELKNEYSLDKIAIAHNANDQAETLIMRALRGTGIEGLVGIKPVRDGIFIRPILILRRKEIEEYCEINNLNPRIDETNLEEIYSRNKIRLKAIPFIEDNFNPDIVATLNRLAYSCSKDVEFIQEEVEKRFPKLCIKENHSILIKEEAFNEKEALLTRIIKKALFEVSSKHNNFELKHIQDIIALKDKGTGKQINITNGVIALNEYGDIRIKLVDSKKAKENKVLNLENIKDELDKNQKVVIEDDILGNYELIVEDLKKGEKFSKDRFIKSFDYDKISNIDIRFRQNGDKIIPLGMKSSKKLKDIFINNKIPKEERDFIPLVLFNNEIAWIVGSNVSETFKVTNKTKKVIKITFKGKEN.

Ser-26–Ser-31 contacts ATP.

The protein belongs to the tRNA(Ile)-lysidine synthase family.

The protein resides in the cytoplasm. The enzyme catalyses cytidine(34) in tRNA(Ile2) + L-lysine + ATP = lysidine(34) in tRNA(Ile2) + AMP + diphosphate + H(+). Functionally, ligates lysine onto the cytidine present at position 34 of the AUA codon-specific tRNA(Ile) that contains the anticodon CAU, in an ATP-dependent manner. Cytidine is converted to lysidine, thus changing the amino acid specificity of the tRNA from methionine to isoleucine. The chain is tRNA(Ile)-lysidine synthase from Clostridium perfringens (strain 13 / Type A).